Here is a 66-residue protein sequence, read N- to C-terminus: Large ribosomal subunit protein bL35 (66 aa).

A compositionally biased stretch (basic residues) spans 1-26 (MPKMKTHRGSAKRFKKTGSGKLKRSH). Positions 1–48 (MPKMKTHRGSAKRFKKTGSGKLKRSHAYTSHLFANKSQKQKRKLRKSA) are disordered.

The protein belongs to the bacterial ribosomal protein bL35 family. Part of the 50S ribosomal subunit.

The sequence is that of Large ribosomal subunit protein bL35 from Bacillus subtilis (strain 168).